Reading from the N-terminus, the 247-residue chain is L-cystine import ATP-binding protein TcyC (247 aa).

One can recognise an ABC transporter domain in the interval 2 to 240 (LTVKGLNKSF…PKEERTQRFL (239 aa)). 34 to 41 (GPSGSGKT) provides a ligand contact to ATP.

Belongs to the ABC transporter superfamily. L-cystine importer (TC 3.A.1.3.14) family. As to quaternary structure, the complex is composed of two ATP-binding proteins (TcyC), two transmembrane proteins (TcyB) and a solute-binding protein (TcyA).

It is found in the cell membrane. In terms of biological role, part of the ABC transporter complex TcyABC involved in L-cystine import. Responsible for energy coupling to the transport system. In Bacillus subtilis (strain 168), this protein is L-cystine import ATP-binding protein TcyC (tcyC).